Consider the following 2037-residue polypeptide: Protein SWOLLEN 1 (2037 aa).

11 disordered regions span residues 141 to 179 (VEPG…VKTD), 454 to 487 (REGG…NDRD), 504 to 531 (SVGY…TDKS), 567 to 637 (KTSS…KDAV), 686 to 705 (SLPI…DNTA), 837 to 893 (VGSP…SGGK), 1011 to 1045 (ATPE…PMIP), 1148 to 1197 (KHVQ…ESGP), 1729 to 1748 (SGET…KRPR), 1793 to 1812 (KSTR…TGLQ), and 1841 to 2037 (EAST…QSKK). Positions 147-157 (SHERSLSKEET) are enriched in basic and acidic residues. The span at 158–176 (VNLQPNPSVDDTPGESSVV) shows a compositional bias: polar residues. Residues 454-466 (REGGVSKKSDNEG) show a composition bias toward basic and acidic residues. Low complexity predominate over residues 504 to 514 (SVGYVSGGSTS). Polar residues predominate over residues 515-526 (ELAESESQSDSI). Low complexity predominate over residues 841-852 (STSSLDKTAAKS). A compositionally biased stretch (basic residues) spans 853-865 (SKAKSERKPRRTS). Composition is skewed to polar residues over residues 1025-1041 (ETPS…SGTN) and 1151-1171 (QSGT…TSTV). Residues 1179 to 1189 (TRVKSRKRKKM) show a composition bias toward basic residues. Residues 1794-1805 (STREENKPDPLR) show a composition bias toward basic and acidic residues. 3 stretches are compositionally biased toward polar residues: residues 1874 to 1886 (KTIS…TISR), 1942 to 1964 (EEQT…STNK), and 2013 to 2023 (LQTSMMTSKIP). Positions 2028–2037 (SKSHLSQSKK) are enriched in basic residues.

In terms of assembly, interacts with importin alpha IMPA1 and IMPA2, required for nuclear-localized proteins import. As to expression, mainly expressed in seedlings, flower buds and stems, and, to a lower extent, in leaves and siliques.

It localises to the nucleus. In terms of biological role, under salt stress, appears to prevent the accumulation of reactive oxygen species (ROS) in roots and required for the maintenance of cell wall integrity (cellulose, pectin and lignin composition) by interacting with importin alpha (e.g. IMPA1 and IMPA2) and binding to the promoter of several ROS- and cell wall-related genes to regulate their expression. Necessary for cells organization in meristems and root elongation zones as well as for root elongation in high salinity, but not upon osmotic stress. This Arabidopsis thaliana (Mouse-ear cress) protein is Protein SWOLLEN 1.